The sequence spans 75 residues: Conotoxin Vc6a (75 aa).

An N-terminal signal peptide occupies residues 1 to 22; it reads MKLTCVVIVAVLFLTANTFATA. The propeptide occupies 23-49; sequence DDPRNGLENLFLKAHHEMNPEASKLNE. Disulfide bonds link Cys51/Cys66, Cys58/Cys69, and Cys65/Cys74.

As to expression, expressed by the venom duct.

The protein localises to the secreted. The polypeptide is Conotoxin Vc6a (Conus victoriae (Queen Victoria cone)).